Here is a 460-residue protein sequence, read N- to C-terminus: Cysteine--tRNA ligase (460 aa).

Zn(2+) is bound at residue cysteine 29. A 'HIGH' region motif is present at residues 31-41; that stretch reads MTVYDYMHIGH. The Zn(2+) site is built by cysteine 210, histidine 235, and glutamate 239. The short motif at 267-271 is the 'KMSKS' region element; the sequence is KMSKS. Lysine 270 contacts ATP.

This sequence belongs to the class-I aminoacyl-tRNA synthetase family. Monomer. Requires Zn(2+) as cofactor.

It is found in the cytoplasm. The enzyme catalyses tRNA(Cys) + L-cysteine + ATP = L-cysteinyl-tRNA(Cys) + AMP + diphosphate. The sequence is that of Cysteine--tRNA ligase from Coxiella burnetii (strain RSA 493 / Nine Mile phase I).